The following is a 298-amino-acid chain: Protoheme IX farnesyltransferase (298 aa).

9 consecutive transmembrane segments (helical) span residues V16–P36, A45–L65, V93–I113, T114–K134, I141–G161, S172–F192, I218–S238, F241–L261, and I277–V297.

The protein belongs to the UbiA prenyltransferase family. Protoheme IX farnesyltransferase subfamily.

The protein localises to the cell inner membrane. It catalyses the reaction heme b + (2E,6E)-farnesyl diphosphate + H2O = Fe(II)-heme o + diphosphate. The protein operates within porphyrin-containing compound metabolism; heme O biosynthesis; heme O from protoheme: step 1/1. Functionally, converts heme B (protoheme IX) to heme O by substitution of the vinyl group on carbon 2 of heme B porphyrin ring with a hydroxyethyl farnesyl side group. This is Protoheme IX farnesyltransferase from Xanthomonas axonopodis pv. citri (strain 306).